We begin with the raw amino-acid sequence, 305 residues long: Probable lipid kinase YegS-like (305 aa).

The DAGKc domain occupies 2-134 (HPPAPALLII…DLAKVNDQRY (133 aa)). ATP contacts are provided by residues threonine 40, 66–72 (GDGTINE), and threonine 95. 3 residues coordinate Mg(2+): leucine 215, aspartate 218, and leucine 220. Glutamate 271 (proton acceptor) is an active-site residue.

Belongs to the diacylglycerol/lipid kinase family. YegS lipid kinase subfamily. Mg(2+) serves as cofactor. Requires Ca(2+) as cofactor.

The protein resides in the cytoplasm. Probably phosphorylates lipids; the in vivo substrate is unknown. This chain is Probable lipid kinase YegS-like, found in Serratia proteamaculans (strain 568).